A 1312-amino-acid chain; its full sequence is uncharacterized protein (1312 aa).

Residues 1-20 (MRNNLIYTMFLSCLHFETFC) form the signal peptide. The span at 299 to 344 (TTTSSSTMLSSTTLLTTETETRESSSTGSTQTTTPSTEPSTTITTP) shows a compositional bias: low complexity. Disordered regions lie at residues 299-503 (TTTS…TTTY), 565-609 (EITS…PTGG), 645-692 (KETR…PTGG), 749-775 (SSSSKFSITPTPTPSSGTTTYNWPTGG), 812-864 (KTRT…GGTT), 899-942 (KTRT…PTGG), 1048-1079 (KTRTETTSDAQGCKATSTTQTPTTFNWPTGGT), and 1114-1165 (NTTR…TLET). Over residues 345-357 (MEQSSTVSSVQKT) the composition is skewed to polar residues. Residues 365–503 (SSSTTVPTSA…STPATPTTTY (139 aa)) are compositionally biased toward low complexity. Residues 565-574 (EITSDAEGCK) show a composition bias toward basic and acidic residues. Over residues 576–609 (TSSTPTPSSTSVHSTTATPSTTPGTTTYNWPTGG) the composition is skewed to low complexity. Basic and acidic residues predominate over residues 645 to 659 (KETRTETTTDADGCK). Over residues 660 to 692 (KTSSTSSSTPSLKHSTTPTPTPGTTTYNWPTGG) the composition is skewed to low complexity. Residues 813–825 (TRTETTTDAEGCK) are compositionally biased toward basic and acidic residues. Positions 826–864 (KTSSTSKISTTPTSPTSSKPTPTSTSMTTTYNWPTGGTT) are enriched in low complexity. The segment covering 899–908 (KTRTETTTDA) has biased composition (polar residues). Residues 914 to 942 (TSSTSLKPTSPSSSTASPPTTTYNWPTGG) show a composition bias toward low complexity. Positions 1048–1057 (KTRTETTSDA) are enriched in polar residues. Residues 1063 to 1076 (TSTTQTPTTFNWPT) are compositionally biased toward low complexity. Over residues 1114–1123 (NTTRTETTSD) the composition is skewed to polar residues. Over residues 1130–1154 (TSSGTTSTMSPGTTGGTTVSRTTNS) the composition is skewed to low complexity. The span at 1155-1164 (NNPIDSSTLE) shows a compositional bias: polar residues. A Sushi domain is found at 1239-1306 (ATCSSLNLNL…WSGTPEKCVA (68 aa)). Disulfide bonds link cysteine 1241-cysteine 1291 and cysteine 1273-cysteine 1304.

The protein localises to the secreted. This is an uncharacterized protein from Caenorhabditis elegans.